A 20-amino-acid chain; its full sequence is AIGXQPAAEAEAPFQISLMK.

In terms of domain architecture, Peptidase S1 spans 1–20 (AIGXQPAAEAEAPFQISLMK).

The protein belongs to the peptidase S1 family.

It is found in the secreted. Functionally, protease that shows specificity similar to chymotrypsin. The chain is Mite allergen Der p 6 (DERP6) from Dermatophagoides pteronyssinus (European house dust mite).